The sequence spans 279 residues: 2-dehydropantoate 2-reductase (279 aa).

Residues 6–11 (GLGAVG), Lys-66, and Asn-86 each bind NADP(+). The active-site Proton donor is the Lys-158. Substrate is bound by residues Lys-158, Asn-162, Asn-166, Asn-176, and 225–228 (NLSS). Residue Glu-240 participates in NADP(+) binding.

Belongs to the ketopantoate reductase family.

The protein localises to the cytoplasm. It catalyses the reaction (R)-pantoate + NAD(+) = 2-dehydropantoate + NADH + H(+). The enzyme catalyses (R)-pantoate + NADP(+) = 2-dehydropantoate + NADPH + H(+). Its pathway is cofactor biosynthesis; coenzyme A biosynthesis. Its function is as follows. Catalyzes the NAD(P)H-dependent reduction of ketopantoate into pantoic acid. The protein is 2-dehydropantoate 2-reductase of Pyrobaculum aerophilum (strain ATCC 51768 / DSM 7523 / JCM 9630 / CIP 104966 / NBRC 100827 / IM2).